The following is a 467-amino-acid chain: Probable Xaa-Pro aminopeptidase SMAC_04549 (467 aa).

Mn(2+) contacts are provided by Asp263, Asp274, Glu397, and Glu437.

The protein belongs to the peptidase M24B family. Mn(2+) is required as a cofactor.

It carries out the reaction Release of any N-terminal amino acid, including proline, that is linked to proline, even from a dipeptide or tripeptide.. Functionally, catalyzes the removal of a penultimate prolyl residue from the N-termini of peptides. This is Probable Xaa-Pro aminopeptidase SMAC_04549 from Sordaria macrospora (strain ATCC MYA-333 / DSM 997 / K(L3346) / K-hell).